A 297-amino-acid chain; its full sequence is Probable endonuclease 4 (297 aa).

Zn(2+) contacts are provided by H69, H110, E145, D179, H182, H214, D227, H229, and E259.

This sequence belongs to the AP endonuclease 2 family. Zn(2+) serves as cofactor.

It carries out the reaction Endonucleolytic cleavage to 5'-phosphooligonucleotide end-products.. Its function is as follows. Endonuclease IV plays a role in DNA repair. It cleaves phosphodiester bonds at apurinic or apyrimidinic (AP) sites, generating a 3'-hydroxyl group and a 5'-terminal sugar phosphate. The protein is Probable endonuclease 4 of Listeria monocytogenes serotype 4b (strain F2365).